Reading from the N-terminus, the 194-residue chain is HTH-type transcriptional regulator BetI (194 aa).

Residues 8–68 (EIRRAQLIDA…ATMRHVLRDL (61 aa)) form the HTH tetR-type domain. Positions 31–50 (TLASVAQRANISTGIVSHYF) form a DNA-binding region, H-T-H motif.

It participates in amine and polyamine biosynthesis; betaine biosynthesis via choline pathway [regulation]. Repressor involved in the biosynthesis of the osmoprotectant glycine betaine. It represses transcription of the choline transporter BetT and the genes of BetAB involved in the synthesis of glycine betaine. This chain is HTH-type transcriptional regulator BetI, found in Burkholderia lata (strain ATCC 17760 / DSM 23089 / LMG 22485 / NCIMB 9086 / R18194 / 383).